The primary structure comprises 347 residues: Protein RecA (347 aa).

66-73 lines the ATP pocket; that stretch reads GPESSGKT. The tract at residues 328–347 is disordered; sequence MPKPNAPKATDEALDETGTD.

This sequence belongs to the RecA family.

The protein resides in the cytoplasm. In terms of biological role, can catalyze the hydrolysis of ATP in the presence of single-stranded DNA, the ATP-dependent uptake of single-stranded DNA by duplex DNA, and the ATP-dependent hybridization of homologous single-stranded DNAs. It interacts with LexA causing its activation and leading to its autocatalytic cleavage. This chain is Protein RecA, found in Hydrogenovibrio crunogenus (strain DSM 25203 / XCL-2) (Thiomicrospira crunogena).